We begin with the raw amino-acid sequence, 517 residues long: 2-isopropylmalate synthase (517 aa).

Residues 5-267 (VIIFDTTLRD…HTNVRCQEIY (263 aa)) enclose the Pyruvate carboxyltransferase domain. The Mn(2+) site is built by aspartate 14, histidine 202, histidine 204, and asparagine 238. The tract at residues 392-517 (RLKCFHVDSS…QRKYIKKNNN (126 aa)) is regulatory domain.

This sequence belongs to the alpha-IPM synthase/homocitrate synthase family. LeuA type 1 subfamily. In terms of assembly, homodimer. Requires Mn(2+) as cofactor.

The protein localises to the cytoplasm. It catalyses the reaction 3-methyl-2-oxobutanoate + acetyl-CoA + H2O = (2S)-2-isopropylmalate + CoA + H(+). The protein operates within amino-acid biosynthesis; L-leucine biosynthesis; L-leucine from 3-methyl-2-oxobutanoate: step 1/4. Functionally, catalyzes the condensation of the acetyl group of acetyl-CoA with 3-methyl-2-oxobutanoate (2-ketoisovalerate) to form 3-carboxy-3-hydroxy-4-methylpentanoate (2-isopropylmalate). This chain is 2-isopropylmalate synthase, found in Blochmanniella pennsylvanica (strain BPEN).